Consider the following 163-residue polypeptide: C-type lectin lectoxin-Lio2 (163 aa).

A signal peptide spans 1–21 (MERFIFAALLVVALSLSGTGA). 3 disulfides stabilise this stretch: C25–C36, C53–C152, and C127–C144. Residues 32–153 (SDGYCYKVFK…CRSKRYFICK (122 aa)) enclose the C-type lectin domain. Residues 117-119 (EPN) carry the Mannose-binding motif. Ca(2+)-binding residues include E125 and D141.

Belongs to the true venom lectin family. In terms of tissue distribution, expressed by the venom gland.

The protein resides in the secreted. Functionally, mannose-binding lectin which recognizes specific carbohydrate structures and agglutinates a variety of animal cells by binding to cell-surface glycoproteins and glycolipids. May be a calcium-dependent lectin. In Erythrolamprus poecilogyrus (Water snake), this protein is C-type lectin lectoxin-Lio2.